Here is a 345-residue protein sequence, read N- to C-terminus: uncharacterized protein (345 aa).

Solcar repeat units lie at residues 80–153 (MSFF…MKSR), 162–246 (SDPQ…LKLK), and 256–339 (NLAH…ILNF). 6 helical membrane passes run 83–103 (FEALGAGICAGLAVDLSLFPI), 128–148 (GLGSILVGSAPGASLFFTTYE), 220–240 (AGYGITIAREIPFTLIQFPIW), 262–282 (AISGSIAGGIAAALTTPFDVV), 296–316 (VFTIKSIVAHEGFLALYKGIV), and 319–339 (VLWLSGGGAIFLGCYDVILNF).

It belongs to the mitochondrial carrier (TC 2.A.29) family.

It is found in the mitochondrion inner membrane. This is an uncharacterized protein from Schizosaccharomyces pombe (strain 972 / ATCC 24843) (Fission yeast).